The sequence spans 195 residues: Cysteine/O-acetylserine efflux protein (195 aa).

5 helical membrane-spanning segments follow: residues serine 47–isoleucine 67, alanine 70–isoleucine 90, isoleucine 105–valine 125, valine 142–leucine 162, and glutamine 177–phenylalanine 194.

The protein belongs to the Rht family.

It is found in the cell inner membrane. The catalysed reaction is O-acetyl-L-serine(in) = O-acetyl-L-serine(out). The enzyme catalyses L-cysteine(in) = L-cysteine(out). Functionally, exporter of O-acetylserine (OAS) and cysteine. The protein is Cysteine/O-acetylserine efflux protein (eamB) of Shigella boydii serotype 4 (strain Sb227).